Reading from the N-terminus, the 413-residue chain is Multifunctional CCA protein (413 aa).

Residues Gly8 and Arg11 each contribute to the ATP site. Gly8 and Arg11 together coordinate CTP. Asp21 and Asp23 together coordinate Mg(2+). ATP-binding residues include Arg91, Arg137, and Arg140. The CTP site is built by Arg91, Arg137, and Arg140. The 102-residue stretch at 228 to 329 folds into the HD domain; sequence TGVHTLMTLS…VKLFDAIDAW (102 aa).

Belongs to the tRNA nucleotidyltransferase/poly(A) polymerase family. Bacterial CCA-adding enzyme type 1 subfamily. As to quaternary structure, monomer. Can also form homodimers and oligomers. It depends on Mg(2+) as a cofactor. Ni(2+) is required as a cofactor.

The enzyme catalyses a tRNA precursor + 2 CTP + ATP = a tRNA with a 3' CCA end + 3 diphosphate. It catalyses the reaction a tRNA with a 3' CCA end + 2 CTP + ATP = a tRNA with a 3' CCACCA end + 3 diphosphate. Its function is as follows. Catalyzes the addition and repair of the essential 3'-terminal CCA sequence in tRNAs without using a nucleic acid template. Adds these three nucleotides in the order of C, C, and A to the tRNA nucleotide-73, using CTP and ATP as substrates and producing inorganic pyrophosphate. tRNA 3'-terminal CCA addition is required both for tRNA processing and repair. Also involved in tRNA surveillance by mediating tandem CCA addition to generate a CCACCA at the 3' terminus of unstable tRNAs. While stable tRNAs receive only 3'-terminal CCA, unstable tRNAs are marked with CCACCA and rapidly degraded. The protein is Multifunctional CCA protein of Salmonella paratyphi A (strain ATCC 9150 / SARB42).